A 351-amino-acid polypeptide reads, in one-letter code: Trace amine-associated receptor 2 (351 aa).

Residues 1–48 (MAVSSEQHELSHFKRTQTKKEKFNCSEYGNRSCPENERSLGVRVAMYS) are Extracellular-facing. Residues Asn24 and Asn30 are each glycosylated (N-linked (GlcNAc...) asparagine). 2 disulfides stabilise this stretch: Cys33–Cys197 and Cys116–Cys201. The helical transmembrane segment at 49–69 (FMAGSIFITIFGNLAMIISIS) threads the bilayer. At 70-79 (YFKQLHTPTN) the chain is on the cytoplasmic side. A helical membrane pass occupies residues 80–100 (FLILSMAITDFLLGFTIMPYS). Topologically, residues 101–118 (MIRSVENCWYFGLTFCKI) are extracellular. Residues 119–139 (YYSFDLMLSITSIFHLCSVAI) traverse the membrane as a helical segment. Topologically, residues 140–162 (DRFYAICYPLLYSTKITIPVIKR) are cytoplasmic. The helical transmembrane segment at 163–183 (LLLLCWSVPGAFAFGVVFSEA) threads the bilayer. Over 184–207 (YADGIEGYDILVACSSSCPVMFNK) the chain is Extracellular. Residues 208–228 (LWGTTLFMAGFFTPGSMMVGI) traverse the membrane as a helical segment. Residues 229 to 263 (YGKIFAVSRKHAHAINNLRENQNNQVKKDKKAAKT) lie on the Cytoplasmic side of the membrane. The chain crosses the membrane as a helical span at residues 264-284 (LGIVIGVFLLCWFPCFFTILL). At 285–299 (DPFLNFSTPVVLFDA) the chain is on the extracellular side. N-linked (GlcNAc...) asparagine glycosylation is present at Asn289. Residues 300–322 (LTWFGYFNSTCNPLIYGFFYPWF) traverse the membrane as a helical segment. At 323 to 351 (RRALKYILLGKIFSSCFHNTILCMQKESE) the chain is on the cytoplasmic side.

This sequence belongs to the G-protein coupled receptor 1 family. In terms of tissue distribution, not expressed in the pons, thalamus, hypothalamus, hippocampus, caudate, putamen, frontal cortex, basal forebrain, midbrain or liver.

The protein localises to the cell membrane. Functionally, orphan olfactory receptor specific for trace amines. Trace amine compounds are enriched in animal body fluids and act on trace amine-associated receptors (TAARs) to elicit both intraspecific and interspecific innate behaviors. Ligand-binding causes a conformation change that triggers signaling via the G(s)-class of G-proteins which activate adenylate cyclase. This is Trace amine-associated receptor 2 from Homo sapiens (Human).